The primary structure comprises 72 residues: DNA-directed RNA polymerase subunit omega (72 aa).

The protein belongs to the RNA polymerase subunit omega family. In terms of assembly, the RNAP catalytic core consists of 2 alpha, 1 beta, 1 beta' and 1 omega subunit. When a sigma factor is associated with the core the holoenzyme is formed, which can initiate transcription.

It catalyses the reaction RNA(n) + a ribonucleoside 5'-triphosphate = RNA(n+1) + diphosphate. In terms of biological role, promotes RNA polymerase assembly. Latches the N- and C-terminal regions of the beta' subunit thereby facilitating its interaction with the beta and alpha subunits. In Clostridium botulinum (strain Langeland / NCTC 10281 / Type F), this protein is DNA-directed RNA polymerase subunit omega.